We begin with the raw amino-acid sequence, 102 residues long: Small ribosomal subunit protein uS10 (102 aa).

Belongs to the universal ribosomal protein uS10 family. As to quaternary structure, part of the 30S ribosomal subunit.

Its function is as follows. Involved in the binding of tRNA to the ribosomes. The protein is Small ribosomal subunit protein uS10 of Parvibaculum lavamentivorans (strain DS-1 / DSM 13023 / NCIMB 13966).